The following is a 262-amino-acid chain: Glycerol uptake facilitator protein (262 aa).

The Cytoplasmic portion of the chain corresponds to 1-7 (MNFCSKK). The chain crosses the membrane as a helical span at residues 8 to 36 (KILKQCFFEFLGTGLIIFLGISSLVVSKL). The Extracellular segment spans residues 37 to 41 (TNFHF). The helical transmembrane segment at 42-62 (NHCEISCIWGLGVFISICFCS) threads the bilayer. Over 63 to 65 (SVS) the chain is Cytoplasmic. Residues 66–69 (GAHL) lie within the membrane without spanning it. The NPA 1 motif lies at 70 to 72 (NPA). The segment at residues 70 to 80 (NPAITIFLFLS) is an intramembrane region (helical). Residues 81 to 86 (SQFNKK) are Cytoplasmic-facing. Residues 87–110 (KVIPYILSQISGTFFFTFLIYLIF) traverse the membrane as a helical segment. Residues 111 to 145 (NNLLNSFESKYNIVRGTKKSLELASLFCVFPKENY) lie on the Extracellular side of the membrane. Residues 146 to 171 (NFIHDFILEILIGIIFIIILMKLSEK) traverse the membrane as a helical segment. Residues 172 to 180 (NNLFKFYKF) are Cytoplasmic-facing. A helical transmembrane segment spans residues 181–197 (INPFLIGTLVIIINLFL). Residues 198–201 (TSYS) lie on the Extracellular side of the membrane. Residues 202–205 (NITL) lie within the membrane without spanning it. The short motif at 206-208 (NPA) is the NPA 2 element. The helical intramembrane region spans 206–219 (NPARDLGPRIFLSL). Topologically, residues 220–234 (IGWGKLAFTGDDNII) are extracellular. The chain crosses the membrane as a helical span at residues 235-259 (FPYFLIPTIAPIIGINLGGWIYILY). The Cytoplasmic segment spans residues 260-262 (IKK).

This sequence belongs to the MIP/aquaporin (TC 1.A.8) family.

It is found in the cell membrane. The catalysed reaction is glycerol(in) = glycerol(out). Functionally, mediates glycerol diffusion across the cytoplasmic membrane via a pore-type mechanism. This is Glycerol uptake facilitator protein (glpF) from Buchnera aphidicola subsp. Schizaphis graminum (strain Sg).